The following is a 482-amino-acid chain: tRNA sulfurtransferase (482 aa).

One can recognise a THUMP domain in the interval 61-165 (QQVLEILTTT…DDKLNQILAH (105 aa)). ATP-binding positions include 183 to 184 (LI), Lys-265, Gly-287, and Gln-296. A disulfide bond links Cys-344 and Cys-456. A Rhodanese domain is found at 404-482 (IEEHAVVLDI…GFNNVKVYRP (79 aa)). The Cysteine persulfide intermediate role is filled by Cys-456.

The protein belongs to the ThiI family.

The protein resides in the cytoplasm. The catalysed reaction is [ThiI sulfur-carrier protein]-S-sulfanyl-L-cysteine + a uridine in tRNA + 2 reduced [2Fe-2S]-[ferredoxin] + ATP + H(+) = [ThiI sulfur-carrier protein]-L-cysteine + a 4-thiouridine in tRNA + 2 oxidized [2Fe-2S]-[ferredoxin] + AMP + diphosphate. It carries out the reaction [ThiS sulfur-carrier protein]-C-terminal Gly-Gly-AMP + S-sulfanyl-L-cysteinyl-[cysteine desulfurase] + AH2 = [ThiS sulfur-carrier protein]-C-terminal-Gly-aminoethanethioate + L-cysteinyl-[cysteine desulfurase] + A + AMP + 2 H(+). It functions in the pathway cofactor biosynthesis; thiamine diphosphate biosynthesis. Catalyzes the ATP-dependent transfer of a sulfur to tRNA to produce 4-thiouridine in position 8 of tRNAs, which functions as a near-UV photosensor. Also catalyzes the transfer of sulfur to the sulfur carrier protein ThiS, forming ThiS-thiocarboxylate. This is a step in the synthesis of thiazole, in the thiamine biosynthesis pathway. The sulfur is donated as persulfide by IscS. The chain is tRNA sulfurtransferase from Vibrio vulnificus (strain CMCP6).